Consider the following 257-residue polypeptide: Ribosomal RNA small subunit methyltransferase A (257 aa).

Residues His-12, Leu-14, Gly-39, Glu-60, Asp-83, and Asn-101 each coordinate S-adenosyl-L-methionine.

It belongs to the class I-like SAM-binding methyltransferase superfamily. rRNA adenine N(6)-methyltransferase family. RsmA subfamily.

Its subcellular location is the cytoplasm. It catalyses the reaction adenosine(1518)/adenosine(1519) in 16S rRNA + 4 S-adenosyl-L-methionine = N(6)-dimethyladenosine(1518)/N(6)-dimethyladenosine(1519) in 16S rRNA + 4 S-adenosyl-L-homocysteine + 4 H(+). Its function is as follows. Specifically dimethylates two adjacent adenosines (A1518 and A1519) in the loop of a conserved hairpin near the 3'-end of 16S rRNA in the 30S particle. May play a critical role in biogenesis of 30S subunits. The chain is Ribosomal RNA small subunit methyltransferase A from Nitrosomonas europaea (strain ATCC 19718 / CIP 103999 / KCTC 2705 / NBRC 14298).